Consider the following 256-residue polypeptide: Imidazole glycerol phosphate synthase subunit HisF (256 aa).

Active-site residues include Asp11 and Asp130.

It belongs to the HisA/HisF family. In terms of assembly, heterodimer of HisH and HisF.

The protein localises to the cytoplasm. It catalyses the reaction 5-[(5-phospho-1-deoxy-D-ribulos-1-ylimino)methylamino]-1-(5-phospho-beta-D-ribosyl)imidazole-4-carboxamide + L-glutamine = D-erythro-1-(imidazol-4-yl)glycerol 3-phosphate + 5-amino-1-(5-phospho-beta-D-ribosyl)imidazole-4-carboxamide + L-glutamate + H(+). The protein operates within amino-acid biosynthesis; L-histidine biosynthesis; L-histidine from 5-phospho-alpha-D-ribose 1-diphosphate: step 5/9. In terms of biological role, IGPS catalyzes the conversion of PRFAR and glutamine to IGP, AICAR and glutamate. The HisF subunit catalyzes the cyclization activity that produces IGP and AICAR from PRFAR using the ammonia provided by the HisH subunit. This chain is Imidazole glycerol phosphate synthase subunit HisF, found in Psychrobacter sp. (strain PRwf-1).